The following is a 150-amino-acid chain: UPF0178 protein AZOSEA36080 (150 aa).

The protein belongs to the UPF0178 family.

This Aromatoleum aromaticum (strain DSM 19018 / LMG 30748 / EbN1) (Azoarcus sp. (strain EbN1)) protein is UPF0178 protein AZOSEA36080.